The sequence spans 361 residues: Glutamate 5-kinase (361 aa).

K14 serves as a coordination point for ATP. The substrate site is built by S54, D141, and N153. The PUA domain maps to 277–355; the sequence is KGAVIINQGA…KGLKPVIHYD (79 aa).

The protein belongs to the glutamate 5-kinase family.

The protein localises to the cytoplasm. It catalyses the reaction L-glutamate + ATP = L-glutamyl 5-phosphate + ADP. It participates in amino-acid biosynthesis; L-proline biosynthesis; L-glutamate 5-semialdehyde from L-glutamate: step 1/2. Its function is as follows. Catalyzes the transfer of a phosphate group to glutamate to form L-glutamate 5-phosphate. The chain is Glutamate 5-kinase from Chlorobaculum tepidum (strain ATCC 49652 / DSM 12025 / NBRC 103806 / TLS) (Chlorobium tepidum).